The sequence spans 553 residues: Ubiquitin carboxyl-terminal hydrolase 17-like protein 15 (553 aa).

Positions 80–375 (AGLQNMGNTC…QAYVLFYIQK (296 aa)) constitute a USP domain. Cys89 functions as the Nucleophile in the catalytic mechanism. Residue His334 is the Proton acceptor of the active site. 2 stretches are compositionally biased toward basic and acidic residues: residues 382–392 (SESVSRGREPR) and 398–413 (DTDR…RDHP). Disordered stretches follow at residues 382–413 (SESV…RDHP) and 491–524 (STTP…HSKR). A compositionally biased stretch (polar residues) spans 496–505 (HQESMNTGTL). Residues 510 to 524 (GRARRSKGKNKHSKR) are compositionally biased toward basic residues.

The protein belongs to the peptidase C19 family. USP17 subfamily.

It is found in the nucleus. The protein localises to the endoplasmic reticulum. The enzyme catalyses Thiol-dependent hydrolysis of ester, thioester, amide, peptide and isopeptide bonds formed by the C-terminal Gly of ubiquitin (a 76-residue protein attached to proteins as an intracellular targeting signal).. Functionally, deubiquitinating enzyme that removes conjugated ubiquitin from specific proteins to regulate different cellular processes that may include cell proliferation, progression through the cell cycle, apoptosis, cell migration, and the cellular response to viral infection. In Homo sapiens (Human), this protein is Ubiquitin carboxyl-terminal hydrolase 17-like protein 15 (USP17L15).